The chain runs to 152 residues: Deoxyuridine 5'-triphosphate nucleotidohydrolase (152 aa).

Substrate-binding positions include 71-73 (RSG), N84, 88-90 (LVD), and M98.

This sequence belongs to the dUTPase family. Requires Mg(2+) as cofactor.

It carries out the reaction dUTP + H2O = dUMP + diphosphate + H(+). It participates in pyrimidine metabolism; dUMP biosynthesis; dUMP from dCTP (dUTP route): step 2/2. This enzyme is involved in nucleotide metabolism: it produces dUMP, the immediate precursor of thymidine nucleotides and it decreases the intracellular concentration of dUTP so that uracil cannot be incorporated into DNA. The chain is Deoxyuridine 5'-triphosphate nucleotidohydrolase from Shewanella oneidensis (strain ATCC 700550 / JCM 31522 / CIP 106686 / LMG 19005 / NCIMB 14063 / MR-1).